We begin with the raw amino-acid sequence, 189 residues long: UPF0301 protein PputGB1_5045 (189 aa).

The protein belongs to the UPF0301 (AlgH) family.

This is UPF0301 protein PputGB1_5045 from Pseudomonas putida (strain GB-1).